A 557-amino-acid chain; its full sequence is Formate--tetrahydrofolate ligase 2 (557 aa).

ATP is bound at residue 66-73; sequence TPAGEGKT.

This sequence belongs to the formate--tetrahydrofolate ligase family.

The catalysed reaction is (6S)-5,6,7,8-tetrahydrofolate + formate + ATP = (6R)-10-formyltetrahydrofolate + ADP + phosphate. It participates in one-carbon metabolism; tetrahydrofolate interconversion. This chain is Formate--tetrahydrofolate ligase 2, found in Streptococcus pyogenes serotype M5 (strain Manfredo).